Reading from the N-terminus, the 320-residue chain is Aspartate carbamoyltransferase catalytic subunit (320 aa).

Carbamoyl phosphate contacts are provided by Arg-68 and Thr-69. Residue Lys-96 participates in L-aspartate binding. Carbamoyl phosphate is bound by residues Arg-118, His-148, and Gln-151. Positions 181 and 236 each coordinate L-aspartate. Residues Gly-277 and Pro-278 each contribute to the carbamoyl phosphate site.

It belongs to the aspartate/ornithine carbamoyltransferase superfamily. ATCase family. As to quaternary structure, heterododecamer (2C3:3R2) of six catalytic PyrB chains organized as two trimers (C3), and six regulatory PyrI chains organized as three dimers (R2).

The catalysed reaction is carbamoyl phosphate + L-aspartate = N-carbamoyl-L-aspartate + phosphate + H(+). It participates in pyrimidine metabolism; UMP biosynthesis via de novo pathway; (S)-dihydroorotate from bicarbonate: step 2/3. Catalyzes the condensation of carbamoyl phosphate and aspartate to form carbamoyl aspartate and inorganic phosphate, the committed step in the de novo pyrimidine nucleotide biosynthesis pathway. This chain is Aspartate carbamoyltransferase catalytic subunit, found in Methylibium petroleiphilum (strain ATCC BAA-1232 / LMG 22953 / PM1).